The following is a 117-amino-acid chain: Elafin (117 aa).

The first 22 residues, methionine 1–alanine 22, serve as a signal peptide directing secretion. The propeptide occupies alanine 23–lysine 60. SVP-1 clotting repeat units follow at residues valine 29–lysine 54 and glycine 55–lysine 72. Residues valine 29–lysine 72 form a 2 X tandem repeats of SVP-1 like motif region. A WAP domain is found at valine 69–glutamine 117. Disulfide bonds link cysteine 76–cysteine 105, cysteine 83–cysteine 109, cysteine 92–cysteine 104, and cysteine 98–cysteine 113.

Its subcellular location is the secreted. Neutrophil and pancreatic elastase-specific inhibitor of skin. It may prevent elastase-mediated tissue proteolysis. Has been shown to inhibit the alpha-4-beta-2/CHRNA2-CHRNB2 nicotinic acetylcholine receptor and to produce a weak inhibition on Kv11.1/KCNH2/ERG1 and on the transient receptor potential cation channel subfamily V member 1 (TRPV1). In Homo sapiens (Human), this protein is Elafin (PI3).